The sequence spans 503 residues: ATP synthase subunit alpha (503 aa).

170-177 (GDRKTGKT) contacts ATP.

Belongs to the ATPase alpha/beta chains family. As to quaternary structure, F-type ATPases have 2 components, CF(1) - the catalytic core - and CF(0) - the membrane proton channel. CF(1) has five subunits: alpha(3), beta(3), gamma(1), delta(1), epsilon(1). CF(0) has four main subunits: a, b, b' and c.

Its subcellular location is the cellular thylakoid membrane. It carries out the reaction ATP + H2O + 4 H(+)(in) = ADP + phosphate + 5 H(+)(out). In terms of biological role, produces ATP from ADP in the presence of a proton gradient across the membrane. The alpha chain is a regulatory subunit. This Rippkaea orientalis (strain PCC 8801 / RF-1) (Cyanothece sp. (strain PCC 8801)) protein is ATP synthase subunit alpha.